The sequence spans 329 residues: 4-hydroxythreonine-4-phosphate dehydrogenase (329 aa).

2 residues coordinate substrate: His-136 and Thr-137. The a divalent metal cation site is built by His-166, His-211, and His-266. Substrate is bound by residues Lys-274, Asn-283, and Arg-292.

The protein belongs to the PdxA family. As to quaternary structure, homodimer. It depends on Zn(2+) as a cofactor. Requires Mg(2+) as cofactor. Co(2+) is required as a cofactor.

Its subcellular location is the cytoplasm. It catalyses the reaction 4-(phosphooxy)-L-threonine + NAD(+) = 3-amino-2-oxopropyl phosphate + CO2 + NADH. It functions in the pathway cofactor biosynthesis; pyridoxine 5'-phosphate biosynthesis; pyridoxine 5'-phosphate from D-erythrose 4-phosphate: step 4/5. In terms of biological role, catalyzes the NAD(P)-dependent oxidation of 4-(phosphooxy)-L-threonine (HTP) into 2-amino-3-oxo-4-(phosphooxy)butyric acid which spontaneously decarboxylates to form 3-amino-2-oxopropyl phosphate (AHAP). This is 4-hydroxythreonine-4-phosphate dehydrogenase from Escherichia coli O17:K52:H18 (strain UMN026 / ExPEC).